A 490-amino-acid chain; its full sequence is ATP synthase subunit beta (490 aa).

175 to 182 is an ATP binding site; it reads GGAGVGKT.

This sequence belongs to the ATPase alpha/beta chains family. As to quaternary structure, F-type ATPases have 2 components, CF(1) - the catalytic core - and CF(0) - the membrane proton channel. CF(1) has five subunits: alpha(3), beta(3), gamma(1), delta(1), epsilon(1). CF(0) has three main subunits: a(1), b(2) and c(9-12). The alpha and beta chains form an alternating ring which encloses part of the gamma chain. CF(1) is attached to CF(0) by a central stalk formed by the gamma and epsilon chains, while a peripheral stalk is formed by the delta and b chains.

The protein localises to the cell membrane. The catalysed reaction is ATP + H2O + 4 H(+)(in) = ADP + phosphate + 5 H(+)(out). Its function is as follows. Produces ATP from ADP in the presence of a proton gradient across the membrane. The catalytic sites are hosted primarily by the beta subunits. The polypeptide is ATP synthase subunit beta (Acidothermus cellulolyticus (strain ATCC 43068 / DSM 8971 / 11B)).